We begin with the raw amino-acid sequence, 594 residues long: Capsid vertex component 1 (594 aa).

Disordered regions lie at residues 52-77 (GRSTGRAPGGDEDDAPASDDAEDAVG), 176-205 (NKRDRQHQLATTTNHRRRGGLRNNLDNGSD), 443-468 (ARRQRERSAPKPQELLFGPRNESGPP), and 575-594 (GRQEPETPRVSGRRLPFDDL). A compositionally biased stretch (acidic residues) spans 61–76 (GDEDDAPASDDAEDAV).

Belongs to the herpesviridae CVC1 protein family. In terms of assembly, interacts (via C-terminus) with capsid vertex component 2/CVC2.

It is found in the virion. Its subcellular location is the host nucleus. Functionally, capsid vertex-specific component that plays a role during viral DNA encapsidation, assuring correct genome cleavage and presumably stabilizing capsids that contain full-length viral genomes. The sequence is that of Capsid vertex component 1 from Homo sapiens (Human).